The chain runs to 191 residues: MQYDIASIIQGYAQGYFLMADDNDCLGWYGSRDRTLIPLDERFRYPKSLQRVLNQERFTVAINRDFAAVVAGCANRESTWISQELQEIYRLLYQTGYAYSFETWQGEELAGGILGIVIGGAFIGESMFYRIPEGSKVAMVKLVERLRQREFVMFDAQMMNPHLERFGAYRIKDKEYKTLLEKALLSPSTLI.

Belongs to the L/F-transferase family.

The protein localises to the cytoplasm. The catalysed reaction is N-terminal L-lysyl-[protein] + L-leucyl-tRNA(Leu) = N-terminal L-leucyl-L-lysyl-[protein] + tRNA(Leu) + H(+). The enzyme catalyses N-terminal L-arginyl-[protein] + L-leucyl-tRNA(Leu) = N-terminal L-leucyl-L-arginyl-[protein] + tRNA(Leu) + H(+). It catalyses the reaction L-phenylalanyl-tRNA(Phe) + an N-terminal L-alpha-aminoacyl-[protein] = an N-terminal L-phenylalanyl-L-alpha-aminoacyl-[protein] + tRNA(Phe). Functionally, functions in the N-end rule pathway of protein degradation where it conjugates Leu, Phe and, less efficiently, Met from aminoacyl-tRNAs to the N-termini of proteins containing an N-terminal arginine or lysine. This chain is Leucyl/phenylalanyl-tRNA--protein transferase, found in Nostoc sp. (strain PCC 7120 / SAG 25.82 / UTEX 2576).